Here is a 355-residue protein sequence, read N- to C-terminus: MSEDKMNGRSIRINRLPATIVAILLTFVLVYFLNFHQEERPAIYGMLRSENPSRVNLRKMLIAAIQAAQRGGLEVLDVARSRQLKERSKGKTDEGVNDPFTDADGRSHCVMKQGLQRIFPRVQIFSEEDKEHCKQAHGYDLDPTVLHETAQIPDVTVNAQDVTVWVDPLDATKEFTEELYEYVTTMVCVAVAGRPIIGVIHSPFNGQTAWAWVGNSMSEYLSNLHPQHSPNNQAPIITVSRSHTAGAKDLARGIFGENVSLLTAAGAGYKVLQVVANNATAYLHTSKIKKWDICAGDAILHALGGTMTTLNDQLINYGPEESPVNTEGLLATLEQHDEYMDKLSKYREAHNGKLA.

A helical membrane pass occupies residues 16 to 36; the sequence is LPATIVAILLTFVLVYFLNFH. Residues glutamate 127, aspartate 167, leucine 169, aspartate 170, and aspartate 292 each coordinate Mg(2+). Substrate is bound at residue glutamate 127. Substrate contacts are provided by residues 169–172 and aspartate 292; that span reads LDAT.

This sequence belongs to the inositol monophosphatase superfamily. Mg(2+) is required as a cofactor.

The protein localises to the membrane. The catalysed reaction is a myo-inositol phosphate + H2O = myo-inositol + phosphate. It participates in polyol metabolism; myo-inositol biosynthesis; myo-inositol from D-glucose 6-phosphate: step 2/2. The polypeptide is Putative inositol monophosphatase 3 (Drosophila melanogaster (Fruit fly)).